The chain runs to 629 residues: Nicotinic receptor-associated protein 1 (629 aa).

C2 domains are found at residues Met-1–Leu-144 and Arg-162–Leu-299. Ca(2+) contacts are provided by Asp-33, Asp-39, Asp-108, Asp-110, Asp-122, Asp-192, Asp-198, Asp-254, Asp-256, and Asp-274. The VWFA domain occupies Glu-342–Leu-561. 2 disordered regions span residues Gly-581–Tyr-600 and Ile-607–Tyr-629.

Belongs to the copine family. In terms of assembly, interacts with nicotinic acetylcholine receptor. Ca(2+) serves as cofactor.

It localises to the cell membrane. In terms of biological role, exhibits calcium-dependent phospholipid binding properties. May function in membrane trafficking. Regulates synaptic levels of nicotinic acetylcholine receptor subunit lev-1 and unc-38 in the nerve cord. Involved in nicotinic acetylcholine receptor (nAChR)-mediated sensitivity to nicotine and levamisole. Affects directional sperm motility. The protein is Nicotinic receptor-associated protein 1 of Caenorhabditis briggsae.